A 605-amino-acid chain; its full sequence is Alanine--tRNA ligase (605 aa).

Histidine 463, histidine 467, cysteine 565, and histidine 569 together coordinate Zn(2+).

This sequence belongs to the class-II aminoacyl-tRNA synthetase family. It depends on Zn(2+) as a cofactor.

The protein resides in the cytoplasm. The catalysed reaction is tRNA(Ala) + L-alanine + ATP = L-alanyl-tRNA(Ala) + AMP + diphosphate. In terms of biological role, catalyzes the attachment of alanine to tRNA(Ala) in a two-step reaction: alanine is first activated by ATP to form Ala-AMP and then transferred to the acceptor end of tRNA(Ala). Also edits incorrectly charged Ser-tRNA(Ala) and Gly-tRNA(Ala) via its editing domain. This is Alanine--tRNA ligase (alaS) from Treponema pallidum (strain Nichols).